Reading from the N-terminus, the 182-residue chain is Nuclear cap-binding protein subunit 2 (182 aa).

Residues Tyr-13, Tyr-35, Arg-104–Asp-108, Arg-115–Arg-119, and Gln-125–Val-126 each bind mRNA. In terms of domain architecture, RRM spans Asn-32–Gly-110. The segment at Gly-114 to Asn-182 is disordered. Over residues Val-126–Pro-136 the composition is skewed to basic and acidic residues. A compositionally biased stretch (polar residues) spans Arg-145–Arg-175.

Belongs to the RRM NCBP2 family. In terms of assembly, component of the nuclear cap-binding complex (CBC), a heterodimer composed of cbc1 and cbc2 that interacts with capped RNAs.

The protein localises to the cytoplasm. The protein resides in the perinuclear region. Its subcellular location is the nucleus. Its function is as follows. Component of the CBC complex, which binds co-transcriptionally to the 5' cap of pre-mRNAs and is involved in maturation, export and degradation of nuclear mRNAs. The protein is Nuclear cap-binding protein subunit 2 (cbc2) of Schizosaccharomyces pombe (strain 972 / ATCC 24843) (Fission yeast).